The following is a 255-amino-acid chain: Glutamate racemase (255 aa).

Substrate is bound by residues 7–8 (DS) and 39–40 (YG). C70 (proton donor/acceptor) is an active-site residue. Substrate is bound at residue 71–72 (NT). The active-site Proton donor/acceptor is the C181. 182-183 (TH) provides a ligand contact to substrate.

This sequence belongs to the aspartate/glutamate racemases family.

The enzyme catalyses L-glutamate = D-glutamate. It participates in cell wall biogenesis; peptidoglycan biosynthesis. Its function is as follows. Provides the (R)-glutamate required for cell wall biosynthesis. The polypeptide is Glutamate racemase (Helicobacter pylori (strain ATCC 700392 / 26695) (Campylobacter pylori)).